The primary structure comprises 479 residues: Trigger factor (479 aa).

A PPIase FKBP-type domain is found at 174–261 (GDIAVVSFSG…LKELKTRELP (88 aa)). A disordered region spans residues 438–479 (VLESEAKTSKPAAKSKGSKTKSTKTKTNKANTEKPASDKSKS). Over residues 453–464 (KGSKTKSTKTKT) the composition is skewed to basic residues. Residues 468–479 (NTEKPASDKSKS) show a composition bias toward basic and acidic residues.

It belongs to the FKBP-type PPIase family. Tig subfamily.

It localises to the cytoplasm. The enzyme catalyses [protein]-peptidylproline (omega=180) = [protein]-peptidylproline (omega=0). Its function is as follows. Involved in protein export. Acts as a chaperone by maintaining the newly synthesized protein in an open conformation. Functions as a peptidyl-prolyl cis-trans isomerase. The sequence is that of Trigger factor from Prochlorococcus marinus (strain MIT 9313).